A 249-amino-acid chain; its full sequence is Cytokine-inducible SH2-containing protein (249 aa).

The interval 41–64 (AFPEEPAPTFAAPEPDGSAPQTRD) is disordered. Positions 84–165 (WYWGSITASE…PDVVSLIQHY (82 aa)) constitute an SH2 domain. In terms of domain architecture, SOCS box spans 200–248 (KLLRPLGRRDSIPSLQHLCRLRINRCTTEVERLPLPRRMGDYLKQYPFQ).

The protein operates within protein modification; protein ubiquitination. In terms of biological role, SOCS family proteins form part of a classical negative feedback system that regulates cytokine signal transduction. CIS is involved in the negative regulation of cytokines that signal through the JAK-STAT5 pathway such as erythropoietin, prolactin and interleukin 3 (IL3) receptor. Inhibits STAT5 trans-activation by suppressing its tyrosine phosphorylation. May be a substrate-recognition component of a SCF-like ECS (Elongin BC-CUL2/5-SOCS-box protein) E3 ubiquitin-protein ligase complex which mediates the ubiquitination and subsequent proteasomal degradation of target proteins. In Gallus gallus (Chicken), this protein is Cytokine-inducible SH2-containing protein (CISH).